Consider the following 240-residue polypeptide: Ribosomal RNA small subunit methyltransferase G (240 aa).

Residues Gly79, Phe84, 130 to 131 (AE), and Arg149 contribute to the S-adenosyl-L-methionine site.

This sequence belongs to the methyltransferase superfamily. RNA methyltransferase RsmG family.

The protein localises to the cytoplasm. Functionally, specifically methylates the N7 position of a guanine in 16S rRNA. This chain is Ribosomal RNA small subunit methyltransferase G, found in Lactobacillus helveticus (strain DPC 4571).